Consider the following 807-residue polypeptide: Glycerol-3-phosphate acyltransferase (807 aa).

The HXXXXD motif signature appears at 308–313 (CHRSHM).

The protein belongs to the GPAT/DAPAT family.

It localises to the cell inner membrane. It catalyses the reaction sn-glycerol 3-phosphate + an acyl-CoA = a 1-acyl-sn-glycero-3-phosphate + CoA. The protein operates within phospholipid metabolism; CDP-diacylglycerol biosynthesis; CDP-diacylglycerol from sn-glycerol 3-phosphate: step 1/3. The sequence is that of Glycerol-3-phosphate acyltransferase from Shewanella woodyi (strain ATCC 51908 / MS32).